The following is a 170-amino-acid chain: FMRFamide-like neuropeptides 6 (170 aa).

Positions 1-19 (MNSRGLILTLGVVIAVAFA) are cleaved as a signal peptide. The residue at position 20 (Gln20) is a Pyrrolidone carboxylic acid. Position 39 is a phenylalanine amide (Phe39). The propeptide occupies 42-51 (SDGGNPMEME). Residue Phe60 is modified to Phenylalanine amide. The propeptide occupies 63–81 (RSSGGDEQELVGGDDIDME). Phenylalanine amide is present on Phe90. The propeptide occupies 93 to 104 (RSGPQEDDMPME). Residue Phe113 is modified to Phenylalanine amide. Positions 116–136 (RSSDMEVIGNEGVDGDAHDLF) are excised as a propeptide. Phe145 carries the post-translational modification Phenylalanine amide. Positions 148–159 (RSMGEEEDHDMM) are excised as a propeptide. The segment at 150 to 170 (MGEEEDHDMMKRKSAYMRFGR) is disordered. A compositionally biased stretch (basic residues) spans 159–170 (MKRKSAYMRFGR). Phenylalanine amide is present on Phe168.

This sequence belongs to the FARP (FMRFamide related peptide) family. Each flp gene is expressed in a distinct set of neurons. Flp-6 is expressed in the ASE sensory neurons, AFD, ASG, PVT and I1 neurons.

The protein localises to the secreted. Its function is as follows. FMRFamides and FMRFamide-like peptides are neuropeptides. KSAYMRF-amide has an excitatory effect on dissected pharyngeal myogenic muscle system. The chain is FMRFamide-like neuropeptides 6 from Caenorhabditis elegans.